The following is a 313-amino-acid chain: Porphobilinogen deaminase (313 aa).

Cysteine 242 bears the S-(dipyrrolylmethanemethyl)cysteine mark.

The protein belongs to the HMBS family. In terms of assembly, monomer. Dipyrromethane is required as a cofactor.

The enzyme catalyses 4 porphobilinogen + H2O = hydroxymethylbilane + 4 NH4(+). It functions in the pathway porphyrin-containing compound metabolism; protoporphyrin-IX biosynthesis; coproporphyrinogen-III from 5-aminolevulinate: step 2/4. Its function is as follows. Tetrapolymerization of the monopyrrole PBG into the hydroxymethylbilane pre-uroporphyrinogen in several discrete steps. This Pseudomonas syringae pv. tomato (strain ATCC BAA-871 / DC3000) protein is Porphobilinogen deaminase.